The sequence spans 891 residues: Protein translocase subunit SecA (891 aa).

ATP is bound by residues Gln-83, Gly-101–Thr-105, and Asp-489.

The protein belongs to the SecA family.

Its subcellular location is the plastid. It localises to the chloroplast stroma. The protein localises to the chloroplast thylakoid membrane. It carries out the reaction ATP + H2O + cellular proteinSide 1 = ADP + phosphate + cellular proteinSide 2.. Functionally, has a central role in coupling the hydrolysis of ATP to the transfer of proteins across the thylakoid membrane. The chain is Protein translocase subunit SecA from Diacronema lutheri (Unicellular marine alga).